A 108-amino-acid chain; its full sequence is Nucleoid-associated protein ACP_0492 (108 aa).

Belongs to the YbaB/EbfC family. In terms of assembly, homodimer.

The protein localises to the cytoplasm. Its subcellular location is the nucleoid. Its function is as follows. Binds to DNA and alters its conformation. May be involved in regulation of gene expression, nucleoid organization and DNA protection. The chain is Nucleoid-associated protein ACP_0492 from Acidobacterium capsulatum (strain ATCC 51196 / DSM 11244 / BCRC 80197 / JCM 7670 / NBRC 15755 / NCIMB 13165 / 161).